The following is a 30-amino-acid chain: Ornithine carbamoyltransferase, catabolic (30 aa).

The protein belongs to the aspartate/ornithine carbamoyltransferase superfamily. OTCase family.

The protein resides in the cytoplasm. It catalyses the reaction carbamoyl phosphate + L-ornithine = L-citrulline + phosphate + H(+). Its pathway is amino-acid degradation; L-arginine degradation via ADI pathway; carbamoyl phosphate from L-arginine: step 2/2. The chain is Ornithine carbamoyltransferase, catabolic (arcB) from Aeromonas caviae (Aeromonas punctata).